Here is a 246-residue protein sequence, read N- to C-terminus: Protein phosphatase PhpP (246 aa).

The region spanning 2–240 (EISLLTDVGQ…DNITVALVSM (239 aa)) is the PPM-type phosphatase domain. The Mn(2+) site is built by aspartate 36, glycine 37, aspartate 192, and aspartate 231.

The protein belongs to the PP2C family. Interacts with the kinase domain of StkP. It depends on Mn(2+) as a cofactor.

It localises to the cytoplasm. The catalysed reaction is O-phospho-L-seryl-[protein] + H2O = L-seryl-[protein] + phosphate. It carries out the reaction O-phospho-L-threonyl-[protein] + H2O = L-threonyl-[protein] + phosphate. Phosphatase activity is inhibited by NaF but not by okadaic acid. Protein phosphatase able to dephosphorylate StkP-P and a phosphothreonine residue in a phosphopeptide synthetic substrate. PhpP and its cognate protein kinase StkP appear to constitute a functional signaling couple in vivo, PhpP's primary role probably being to control phosphorylation levels of StkP and of its targets (which include LocZ, DivIVA and KhpB (also called EloR/Jag)). PhpP thus performs an essential control of StkP activity. Overexpression confers an stkP deletion-like phenotype. The chain is Protein phosphatase PhpP (phpP) from Streptococcus pneumoniae.